A 265-amino-acid polypeptide reads, in one-letter code: 3-methyl-2-oxobutanoate hydroxymethyltransferase (265 aa).

D45 and D84 together coordinate Mg(2+). Residues 45–46 (DS), D84, and K112 each bind 3-methyl-2-oxobutanoate. Residue E114 coordinates Mg(2+). E181 serves as the catalytic Proton acceptor.

It belongs to the PanB family. As to quaternary structure, homodecamer; pentamer of dimers. Requires Mg(2+) as cofactor.

Its subcellular location is the cytoplasm. It carries out the reaction 3-methyl-2-oxobutanoate + (6R)-5,10-methylene-5,6,7,8-tetrahydrofolate + H2O = 2-dehydropantoate + (6S)-5,6,7,8-tetrahydrofolate. It functions in the pathway cofactor biosynthesis; (R)-pantothenate biosynthesis; (R)-pantoate from 3-methyl-2-oxobutanoate: step 1/2. Functionally, catalyzes the reversible reaction in which hydroxymethyl group from 5,10-methylenetetrahydrofolate is transferred onto alpha-ketoisovalerate to form ketopantoate. The polypeptide is 3-methyl-2-oxobutanoate hydroxymethyltransferase (Pseudoalteromonas atlantica (strain T6c / ATCC BAA-1087)).